The following is a 149-amino-acid chain: Large ribosomal subunit protein bL17 (149 aa).

Belongs to the bacterial ribosomal protein bL17 family. In terms of assembly, part of the 50S ribosomal subunit. Contacts protein L32.

The chain is Large ribosomal subunit protein bL17 from Kosmotoga olearia (strain ATCC BAA-1733 / DSM 21960 / TBF 19.5.1).